We begin with the raw amino-acid sequence, 752 residues long: Photosystem I P700 chlorophyll a apoprotein A1 (752 aa).

Transmembrane regions (helical) follow at residues Ile73–Ala96, Leu159–His182, Met198–Leu222, Thr294–Tyr312, Trp349–Tyr372, Leu388–Val414, Ala436–His458, and Phe533–Val551. [4Fe-4S] cluster-binding residues include Cys575 and Cys584. 2 consecutive transmembrane segments (helical) span residues His591–Trp612 and Leu666–Phe688. His677 serves as a coordination point for chlorophyll a'. Chlorophyll a-binding residues include Met685 and Tyr693. Trp694 contributes to the phylloquinone binding site. The chain crosses the membrane as a helical span at residues Ala726–Ala746.

It belongs to the PsaA/PsaB family. In terms of assembly, the PsaA/B heterodimer binds the P700 chlorophyll special pair and subsequent electron acceptors. PSI consists of a core antenna complex that captures photons, and an electron transfer chain that converts photonic excitation into a charge separation. The eukaryotic PSI reaction center is composed of at least 11 subunits. The cofactor is P700 is a chlorophyll a/chlorophyll a' dimer, A0 is one or more chlorophyll a, A1 is one or both phylloquinones and FX is a shared 4Fe-4S iron-sulfur center..

It localises to the plastid. It is found in the chloroplast thylakoid membrane. It catalyses the reaction reduced [plastocyanin] + hnu + oxidized [2Fe-2S]-[ferredoxin] = oxidized [plastocyanin] + reduced [2Fe-2S]-[ferredoxin]. Functionally, psaA and PsaB bind P700, the primary electron donor of photosystem I (PSI), as well as the electron acceptors A0, A1 and FX. PSI is a plastocyanin/cytochrome c6-ferredoxin oxidoreductase, converting photonic excitation into a charge separation, which transfers an electron from the donor P700 chlorophyll pair to the spectroscopically characterized acceptors A0, A1, FX, FA and FB in turn. Oxidized P700 is reduced on the lumenal side of the thylakoid membrane by plastocyanin or cytochrome c6. This is Photosystem I P700 chlorophyll a apoprotein A1 from Porphyra purpurea (Red seaweed).